A 212-amino-acid chain; its full sequence is Thymidylate kinase (212 aa).

10 to 17 contacts ATP; the sequence is GLEGAGKT.

Belongs to the thymidylate kinase family.

It catalyses the reaction dTMP + ATP = dTDP + ADP. Its function is as follows. Phosphorylation of dTMP to form dTDP in both de novo and salvage pathways of dTTP synthesis. This Baumannia cicadellinicola subsp. Homalodisca coagulata protein is Thymidylate kinase.